A 231-amino-acid polypeptide reads, in one-letter code: Uridylate kinase (231 aa).

Residue 6–9 (KLSG) participates in ATP binding. The interval 14–19 (GEGGRG) is involved in allosteric activation by GTP. Gly-49 and Arg-53 together coordinate ATP. UMP contacts are provided by residues Asp-66 and 127-134 (TSNPFFTT). 3 residues coordinate ATP: Thr-154, Tyr-160, and Asp-163.

It belongs to the UMP kinase family. In terms of assembly, homohexamer.

It localises to the cytoplasm. It carries out the reaction UMP + ATP = UDP + ADP. Its pathway is pyrimidine metabolism; CTP biosynthesis via de novo pathway; UDP from UMP (UMPK route): step 1/1. Allosterically activated by GTP. Inhibited by UTP. In terms of biological role, catalyzes the reversible phosphorylation of UMP to UDP. This is Uridylate kinase from Thermotoga petrophila (strain ATCC BAA-488 / DSM 13995 / JCM 10881 / RKU-1).